We begin with the raw amino-acid sequence, 270 residues long: Palmitoyltransferase ZDHHC12-A (270 aa).

At 1–8 (MNKSLFKS) the chain is on the cytoplasmic side. The chain crosses the membrane as a helical span at residues 9–29 (GCLVRTAHVILTWIITLILFL). Over 30-45 (HNTDLRRCQERGDLLQ) the chain is Lumenal. Residues 46–66 (PLVFSSVLLLSVLLYFTVSLM) form a helical membrane-spanning segment. Residues 67-145 (DPGFVLSDSQ…DNCVGELNHR (79 aa)) are Cytoplasmic-facing. The 51-residue stretch at 102–152 (RRCGYCFLLQPMRARHCKWCKRCVRRFDHHCPWIDNCVGELNHRWFLLYLC) folds into the DHHC domain. Catalysis depends on cysteine 132, which acts as the S-palmitoyl cysteine intermediate. The helical transmembrane segment at 146–166 (WFLLYLCVQFTAVCWGLQSAW) threads the bilayer. At 167 to 182 (SGFISAPSWQQWFTQN) the chain is on the lumenal side. A helical membrane pass occupies residues 183–203 (VFLLVAFAVTAVFSVVLLLLL). Residues 204 to 270 (CIHAYLASVN…MYIRHNNASV (67 aa)) lie on the Cytoplasmic side of the membrane.

The protein belongs to the DHHC palmitoyltransferase family.

It is found in the golgi apparatus membrane. The protein localises to the endoplasmic reticulum membrane. It catalyses the reaction L-cysteinyl-[protein] + hexadecanoyl-CoA = S-hexadecanoyl-L-cysteinyl-[protein] + CoA. Functionally, palmitoyltransferase that catalyzes the addition of palmitate onto various protein substrates. Has a palmitoyltransferase activity toward gephyrin/GPHN, regulating its clustering at synapses and its function in gamma-aminobutyric acid receptor clustering. Acts as an inhibitor of the NLRP3 inflammasome by mediating palmitoylation of NLRP3, thereby promoting NLRP3 degradation by the chaperone-mediated autophagy (CMA) process. The protein is Palmitoyltransferase ZDHHC12-A of Danio rerio (Zebrafish).